The primary structure comprises 519 residues: Probable DNA ligase (519 aa).

Glutamate 211 contacts ATP. Catalysis depends on lysine 213, which acts as the N6-AMP-lysine intermediate. Residues arginine 218, arginine 233, glutamate 262, phenylalanine 302, arginine 374, and lysine 380 each contribute to the ATP site.

It belongs to the ATP-dependent DNA ligase family. Requires Mg(2+) as cofactor.

It catalyses the reaction ATP + (deoxyribonucleotide)n-3'-hydroxyl + 5'-phospho-(deoxyribonucleotide)m = (deoxyribonucleotide)n+m + AMP + diphosphate.. In terms of biological role, DNA ligase that seals nicks in double-stranded DNA during DNA replication, DNA recombination and DNA repair. This Anaeromyxobacter sp. (strain Fw109-5) protein is Probable DNA ligase.